Reading from the N-terminus, the 164-residue chain is Mineralocorticoid receptor (164 aa).

In terms of domain architecture, NR LBD spans 1–162; sequence QYSWMCLSSF…EFPRCWWRSS (162 aa). 21-hydroxyprogesterone-binding residues include arginine 15 and threonine 143. Residues arginine 15 and threonine 143 each contribute to the aldosterone site. Arginine 15 and threonine 143 together coordinate progesterone.

This sequence belongs to the nuclear hormone receptor family. NR3 subfamily. Heteromultimeric cytoplasmic complex with HSP90, HSP70, and FKBP4, in the absence of ligand. After ligand binding, it translocates to the nucleus and binds to DNA as a homodimer and as a heterodimer with NR3C1. Binds the coactivator NCOA2. May interact with HSD11B2 in the absence of ligand. Binds the coactivators NCOA1, TIF1 and NRIP1. Post-translationally, phosphorylated.

Its subcellular location is the cytoplasm. It localises to the nucleus. The protein localises to the endoplasmic reticulum membrane. Its function is as follows. Receptor for both mineralocorticoids (MC) such as aldosterone and glucocorticoids (GC) such as corticosterone or cortisol. Binds to mineralocorticoid response elements (MRE) and transactivates target genes. The effect of MC is to increase ion and water transport and thus raise extracellular fluid volume and blood pressure and lower potassium levels. The sequence is that of Mineralocorticoid receptor (NR3C2) from Sus scrofa (Pig).